The following is a 335-amino-acid chain: MAVDITLLFRASVKTVKTRNKALGVAVGGGVDGSRDELFRRSPRPKGDFSSRAREVISHIGKLRDFLLEHRKDYINAYSHTMSEYGRMTDTERDQIDQDAQIFMRTCSEAIQQLRTEAHKEIHSQQVKEHRTAVLDFIEDYLKRVCKLYSEQRAIRVKRVVDKKRLSKLEPEPNTKTRESTSSEKVSRSPSKDSEENPATEERPEKILAETQPELGTWGDGKGEDELSPEEIQMFEQENQRLIGEMNSLFDEVRQIEGRVVEISRLQEIFTEKVLQQEAEIDSIHQLVVGATENIKEGNEDIREAIKNNAGFRVWILFFLVMCSFSLLFLDWYDS.

The Cytoplasmic segment spans residues 1–309 (MAVDITLLFR…EDIREAIKNN (309 aa)). Basic and acidic residues predominate over residues 168 to 208 (KLEPEPNTKTRESTSSEKVSRSPSKDSEENPATEERPEKIL). Positions 168-226 (KLEPEPNTKTRESTSSEKVSRSPSKDSEENPATEERPEKILAETQPELGTWGDGKGEDE) are disordered. The region spanning 243-305 (IGEMNSLFDE…KEGNEDIREA (63 aa)) is the t-SNARE coiled-coil homology domain. A helical; Anchor for type IV membrane protein transmembrane segment spans residues 310-330 (AGFRVWILFFLVMCSFSLLFL). Topologically, residues 331 to 335 (DWYDS) are vesicular.

Belongs to the syntaxin family. As to quaternary structure, component of a SNARE complex consisting of STX18, USE1L, BNIP1/SEC20L, and SEC22B. RINT1/TIP20L and ZW10 are associated with the complex through interaction with BNIP1/SEC20L. Interacts directly with USE1L and BNIP1/SEC20L.

Its subcellular location is the endoplasmic reticulum membrane. It is found in the golgi apparatus membrane. Functionally, syntaxin that may be involved in targeting and fusion of Golgi-derived retrograde transport vesicles with the ER. The polypeptide is Syntaxin-18 (STX18) (Pongo abelii (Sumatran orangutan)).